Consider the following 153-residue polypeptide: Transcriptional repressor NrdR (153 aa).

Residues 3–34 (CPFCNNINTQVKDSRAIEDDILIRRRRICLVC) fold into a zinc finger. The region spanning 49 to 139 (FMVIKKNGET…VYMNFKNIND (91 aa)) is the ATP-cone domain.

Belongs to the NrdR family. Requires Zn(2+) as cofactor.

Negatively regulates transcription of bacterial ribonucleotide reductase nrd genes and operons by binding to NrdR-boxes. The chain is Transcriptional repressor NrdR from Ehrlichia canis (strain Jake).